The chain runs to 97 residues: Bacterial microcompartment shell protein EutM (97 aa).

A BMC domain is found at 3 to 87 (ALGMIETRGL…PHGDLEEVFP (85 aa)).

Belongs to the bacterial microcompartments protein family. In terms of assembly, homohexamer with a central pore of up to 8.6 Angstroms diameter. The hexamers pack into a two-dimensional array. Interacts with EutQ.

It localises to the bacterial microcompartment. Its pathway is amine and polyamine degradation; ethanolamine degradation. Functionally, probably a major component of the bacterial microcompartment (BMC) shell dedicated to ethanolamine degradation. Each homohexamer has a central pore with an opening of up to 8.6 Angstroms. A positively-charged funnel leads to the pore from each side of the hexamer. The pore probably allows metabolite passage into and out of the BMC. The polypeptide is Bacterial microcompartment shell protein EutM (eutM) (Escherichia coli O6:H1 (strain CFT073 / ATCC 700928 / UPEC)).